Consider the following 172-residue polypeptide: Ribosome maturation factor RimM (172 aa).

The 74-residue stretch at 95–168 (DDGEFYYHEI…RVDVEILEGL (74 aa)) folds into the PRC barrel domain.

This sequence belongs to the RimM family. As to quaternary structure, binds ribosomal protein uS19.

It localises to the cytoplasm. In terms of biological role, an accessory protein needed during the final step in the assembly of 30S ribosomal subunit, possibly for assembly of the head region. Essential for efficient processing of 16S rRNA. May be needed both before and after RbfA during the maturation of 16S rRNA. It has affinity for free ribosomal 30S subunits but not for 70S ribosomes. The protein is Ribosome maturation factor RimM of Streptococcus pneumoniae (strain P1031).